Here is a 404-residue protein sequence, read N- to C-terminus: Glucose-1-phosphate adenylyltransferase (404 aa).

Alpha-D-glucose 1-phosphate is bound by residues tyrosine 99, glycine 164, 179–180 (EK), and serine 197.

It belongs to the bacterial/plant glucose-1-phosphate adenylyltransferase family.

The enzyme catalyses alpha-D-glucose 1-phosphate + ATP + H(+) = ADP-alpha-D-glucose + diphosphate. The protein operates within capsule biogenesis; capsule polysaccharide biosynthesis. It participates in glycan biosynthesis; glycogen biosynthesis. Its function is as follows. Involved in the biosynthesis of ADP-glucose, a building block, required in the biosynthesis of maltose-1-phosphate (M1P) and in the elongation reactions to produce linear alpha-1,4-glucans. Catalyzes the reaction between ATP and alpha-D-glucose 1-phosphate (G1P) to produce pyrophosphate and ADP-Glc. The sequence is that of Glucose-1-phosphate adenylyltransferase from Mycobacterium ulcerans (strain Agy99).